A 444-amino-acid chain; its full sequence is Phosphoglucosamine mutase (444 aa).

The active-site Phosphoserine intermediate is the S102. Mg(2+) contacts are provided by S102, D241, D243, and D245. Phosphoserine is present on S102.

This sequence belongs to the phosphohexose mutase family. Requires Mg(2+) as cofactor. In terms of processing, activated by phosphorylation.

It carries out the reaction alpha-D-glucosamine 1-phosphate = D-glucosamine 6-phosphate. Catalyzes the conversion of glucosamine-6-phosphate to glucosamine-1-phosphate. This chain is Phosphoglucosamine mutase, found in Mannheimia succiniciproducens (strain KCTC 0769BP / MBEL55E).